Consider the following 155-residue polypeptide: Protein-export protein SecB (155 aa).

This sequence belongs to the SecB family. As to quaternary structure, homotetramer, a dimer of dimers. One homotetramer interacts with 1 SecA dimer.

It is found in the cytoplasm. Its function is as follows. One of the proteins required for the normal export of preproteins out of the cell cytoplasm. It is a molecular chaperone that binds to a subset of precursor proteins, maintaining them in a translocation-competent state. It also specifically binds to its receptor SecA. The chain is Protein-export protein SecB from Psychromonas ingrahamii (strain DSM 17664 / CCUG 51855 / 37).